A 436-amino-acid polypeptide reads, in one-letter code: tRNA(Ile)-lysidine synthase (436 aa).

27 to 32 (SGGVDS) contributes to the ATP binding site.

This sequence belongs to the tRNA(Ile)-lysidine synthase family.

Its subcellular location is the cytoplasm. The enzyme catalyses cytidine(34) in tRNA(Ile2) + L-lysine + ATP = lysidine(34) in tRNA(Ile2) + AMP + diphosphate + H(+). Ligates lysine onto the cytidine present at position 34 of the AUA codon-specific tRNA(Ile) that contains the anticodon CAU, in an ATP-dependent manner. Cytidine is converted to lysidine, thus changing the amino acid specificity of the tRNA from methionine to isoleucine. This Vibrio vulnificus (strain YJ016) protein is tRNA(Ile)-lysidine synthase.